Here is a 1072-residue protein sequence, read N- to C-terminus: Neurofilament heavy polypeptide (1072 aa).

The residue at position 74 (Ser-74) is a Phosphoserine. The IF rod domain occupies 94-409 (EKEQLQALND…KLLEGEECRI (316 aa)). 3 coiled-coil regions span residues 98-132 (LQAL…LRQQ), 174-222 (IAHV…LQEE), and 293-380 (LDRL…QLRE). The tract at residues 278–643 (TVQSTLQSEE…AKSPAEAKSP (366 aa)) is 55 X 6 AA approximate tandem repeats of K-S-P-[VAGSE]-[KEVTSGA]-[EAVK]. A phosphoserine mark is found at Ser-343, Ser-414, and Ser-417. The segment at 454–1072 (EEQTEEIQVT…PEDKAAKGDK (619 aa)) is disordered. Positions 455–487 (EQTEEIQVTEEVTEEEDKEAQGEEEEEAEEGGE) are enriched in acidic residues. Positions 488-499 (EAATTSPPAEEA) are enriched in low complexity. Ser-501 carries the phosphoserine modification. The span at 501–584 (SPEKETKSPV…KSPAEAKSPA (84 aa)) shows a compositional bias: basic and acidic residues. Repeat copies occupy residues 507 to 512 (KSPVKE), 515 to 520 (KSPAEA), 521 to 526 (KSPAEA), 527 to 532 (KSPAEA), 533 to 538 (KSPAEV), 539 to 544 (KSPAEV), 545 to 550 (KSPAEA), 551 to 556 (KSPAEA), 557 to 562 (KSPAEV), 563 to 568 (KSPAEV), 569 to 574 (KSPAEA), 575 to 580 (KSPAEA), 581 to 586 (KSPAEV), 587 to 592 (KSPATV), 593 to 598 (KSPGEA), 599 to 604 (KSPAEA), 605 to 610 (KSPAEV), 611 to 616 (KSPVEA), 617 to 622 (KSPAEA), 623 to 628 (KSPASV), 629 to 634 (KSPGEA), 635 to 640 (KSPAEA), 641 to 646 (KSPAEV), 647 to 652 (KSPATV), 653 to 658 (KSPVEA), 659 to 664 (KSPAEV), 665 to 670 (KSPVTV), 671 to 676 (KSPAEA), 677 to 682 (KSPVEV), 683 to 688 (KSPASV), 689 to 694 (KSPSEA), 695 to 700 (KSPAGA), 701 to 706 (KSPAEA), 707 to 712 (KSPVVA), 713 to 718 (KSPAEA), and 719 to 724 (KSPAEA). 37 positions are modified to phosphoserine: Ser-516, Ser-522, Ser-528, Ser-534, Ser-540, Ser-546, Ser-552, Ser-558, Ser-564, Ser-570, Ser-576, Ser-582, Ser-588, Ser-594, Ser-600, Ser-606, Ser-612, Ser-618, Ser-624, Ser-627, Ser-630, Ser-636, Ser-642, Ser-648, Ser-654, Ser-660, Ser-666, Ser-672, Ser-678, Ser-684, Ser-687, Ser-690, Ser-696, Ser-702, Ser-708, Ser-714, and Ser-720. The segment covering 600 to 620 (SPAEAKSPAEVKSPVEAKSPA) has biased composition (basic and acidic residues). Residues 621–631 (EAKSPASVKSP) show a composition bias toward low complexity. The span at 720-774 (SPAEAKPPAEAKSPAEAKSPAEAKSPAEAKSPAEAKSPVEVKSPEKAKSPVKEGA) shows a compositional bias: basic and acidic residues. The 37; approximate repeat unit spans residues 725–730 (KPPAEA). Tandem repeats lie at residues 731–736 (KSPAEA), 737–742 (KSPAEA), 743–748 (KSPAEA), 749–754 (KSPAEA), 755–760 (KSPVEV), 761–766 (KSPEKA), and 767–772 (KSPVKE). A phosphoserine mark is found at Ser-732, Ser-738, Ser-744, Ser-750, Ser-756, and Ser-762. A 45; approximate repeat occupies 775-780 (KSLAEA). Phosphoserine occurs at positions 776, 782, and 788. 2 consecutive repeat copies span residues 781–786 (KSPEKA) and 787–792 (KSPVKE). 2 stretches are compositionally biased toward basic and acidic residues: residues 781-953 (KSPE…KAAA) and 963-1072 (GVKE…KGDK). The 48; approximate repeat unit spans residues 795 to 800 (KPPAEV). Repeat copies occupy residues 801-806 (KSPEKA), 807-812 (KSPMKE), 815-820 (KSPEKA), and 826-831 (KSPEAK). 4 positions are modified to phosphoserine: Ser-802, Ser-808, Ser-816, and Ser-827. Thr-832 carries the post-translational modification Phosphothreonine. Phosphoserine occurs at positions 846, 852, 860, 880, and 937. A run of 3 repeats spans residues 851-856 (KSPAKE), 859-864 (KSPEKE), and 879-884 (KSPVEE).

It belongs to the intermediate filament family. In terms of assembly, forms heterodimers with NEFL; which can further hetero-oligomerize (in vitro). Forms heterodimers with INA (in vitro). In terms of processing, there are a number of repeats of the tripeptide K-S-P, NFH is phosphorylated on a number of the serines in this motif. It is thought that phosphorylation of NFH results in the formation of interfilament cross bridges that are important in the maintenance of axonal caliber. Post-translationally, phosphorylation seems to play a major role in the functioning of the larger neurofilament polypeptides (NF-M and NF-H), the levels of phosphorylation being altered developmentally and coincidentally with a change in the neurofilament function. Phosphorylated in the head and rod regions by the PKC kinase PKN1, leading to the inhibition of polymerization. As to expression, expressed in the dorsal root ganglion neurons (at protein level). Expressed in cutaneous and muscular sensory neurons.

The protein resides in the cytoplasm. Its subcellular location is the cytoskeleton. It is found in the cell projection. It localises to the axon. Its function is as follows. Neurofilaments usually contain three intermediate filament proteins: NEFL, NEFM, and NEFH which are involved in the maintenance of neuronal caliber. NEFH has an important function in mature axons that is not subserved by the two smaller NEF proteins. May additionally cooperate with the neuronal intermediate filament proteins PRPH and INA to form neuronal filamentous networks. The chain is Neurofilament heavy polypeptide (Nefh) from Rattus norvegicus (Rat).